Consider the following 421-residue polypeptide: Mannose-1-phosphate guanylyltransferase regulatory subunit alpha (421 aa).

The interval 2–252 (LKAVILIGGP…EGCWSQIKSA (251 aa)) is substrate-binding domain. GDP-alpha-D-mannose contacts are provided by E85 and Q248. The tract at residues 274–421 (LASTKEGGPT…SRSFKNQIIL (148 aa)) is hexapeptide repeat domain. A C-loop region spans residues 357-385 (TPSDPNPNDPYSKIDSETLFREGKLTPSI).

This sequence belongs to the transferase hexapeptide repeat family. As to quaternary structure, component of the GMPPA-GMPPB mannose-1-phosphate guanylyltransferase complex composed of 4 gmppa subunits and 8 gmppb subunits; the complex is organized into three layers, a central layer made up of 2 gmppa dimers sandwiched between two layers each made up of 2 gmppb dimers.

It localises to the cytoplasm. In terms of biological role, regulatory subunit of the GMPPA-GMPPB mannose-1-phosphate guanylyltransferase complex; reduces the catalytic activity of GMPPB when part of the complex. Mediates allosteric feedback inhibition of GMPPB catalytic activity upon binding GDP-alpha-D-mannose. Together with GMPPB regulates GDP-alpha-D-mannose levels. This Xenopus tropicalis (Western clawed frog) protein is Mannose-1-phosphate guanylyltransferase regulatory subunit alpha (gmppa).